The following is a 116-amino-acid chain: Large ribosomal subunit protein uL22 (116 aa).

This sequence belongs to the universal ribosomal protein uL22 family. As to quaternary structure, part of the 50S ribosomal subunit.

Its function is as follows. This protein binds specifically to 23S rRNA; its binding is stimulated by other ribosomal proteins, e.g. L4, L17, and L20. It is important during the early stages of 50S assembly. It makes multiple contacts with different domains of the 23S rRNA in the assembled 50S subunit and ribosome. The globular domain of the protein is located near the polypeptide exit tunnel on the outside of the subunit, while an extended beta-hairpin is found that lines the wall of the exit tunnel in the center of the 70S ribosome. This Orientia tsutsugamushi (strain Boryong) (Rickettsia tsutsugamushi) protein is Large ribosomal subunit protein uL22.